We begin with the raw amino-acid sequence, 150 residues long: 3-dehydroquinate dehydratase (150 aa).

Y26 (proton acceptor) is an active-site residue. Substrate contacts are provided by N77, H83, and D90. H103 acts as the Proton donor in catalysis. Substrate contacts are provided by residues 104 to 105 (LS) and R114.

This sequence belongs to the type-II 3-dehydroquinase family. Homododecamer.

The catalysed reaction is 3-dehydroquinate = 3-dehydroshikimate + H2O. The protein operates within metabolic intermediate biosynthesis; chorismate biosynthesis; chorismate from D-erythrose 4-phosphate and phosphoenolpyruvate: step 3/7. In terms of biological role, catalyzes a trans-dehydration via an enolate intermediate. In Enterobacter sp. (strain 638), this protein is 3-dehydroquinate dehydratase.